The primary structure comprises 194 residues: Methylated-DNA--protein-cysteine methyltransferase (194 aa).

Residues Tyr125 and Arg139 each coordinate DNA. Residue Cys156 is the Nucleophile; methyl group acceptor of the active site. A DNA-binding site is contributed by Ser162.

This sequence belongs to the MGMT family.

It is found in the nucleus. The enzyme catalyses a 6-O-methyl-2'-deoxyguanosine in DNA + L-cysteinyl-[protein] = S-methyl-L-cysteinyl-[protein] + a 2'-deoxyguanosine in DNA. The catalysed reaction is a 4-O-methyl-thymidine in DNA + L-cysteinyl-[protein] = a thymidine in DNA + S-methyl-L-cysteinyl-[protein]. Involved in the cellular defense against the biological effects of O6-methylguanine (O6-MeG) and O4-methylthymine (O4-MeT) in DNA. Repairs the methylated nucleobase in DNA by stoichiometrically transferring the methyl group to a cysteine residue in the enzyme. This is a suicide reaction: the enzyme is irreversibly inactivated. The sequence is that of Methylated-DNA--protein-cysteine methyltransferase (MGT1) from Scheffersomyces stipitis (strain ATCC 58785 / CBS 6054 / NBRC 10063 / NRRL Y-11545) (Yeast).